A 649-amino-acid polypeptide reads, in one-letter code: ENTH domain-containing protein C19F8.03c (649 aa).

Residues 2–136 (SPSKWLLTYE…VDYAQVGDAP (135 aa)) form the ENTH domain. Disordered regions lie at residues 280 to 382 (YLQN…NELE), 409 to 440 (LSAE…PNDS), and 590 to 649 (FTHG…PFRS). Phosphoserine is present on residues S285 and S287. A compositionally biased stretch (basic residues) spans 299 to 308 (PTLRKKKSIP). 2 stretches are compositionally biased toward polar residues: residues 313–326 (ESSS…TVQQ) and 340–349 (PETQRTTSRI). Positions 352-381 (QEEEIKEEEMEGEEEEEEEEVPNYESENEL) are enriched in acidic residues. Composition is skewed to polar residues over residues 409 to 418 (LSAEGTSASP), 614 to 624 (TPYTASKNPFS), and 635 to 649 (ARNS…PFRS). T414 carries the post-translational modification Phosphothreonine. The residue at position 417 (S417) is a Phosphoserine.

The protein resides in the cytoplasm. The chain is ENTH domain-containing protein C19F8.03c from Schizosaccharomyces pombe (strain 972 / ATCC 24843) (Fission yeast).